Here is a 287-residue protein sequence, read N- to C-terminus: Complement C1q-like protein 2 (287 aa).

A signal peptide spans 1–21 (MALGLLIAVPLLLQAAPPGAA). The disordered stretch occupies residues 65–144 (LSANPPPPFI…GTGGGGDTEG (80 aa)). Residues 76 to 118 (GPKGDPGRPGKPGPRGPPGEPGPPGPRGPPGEKGDSGRPGLPG) enclose the Collagen-like domain. A compositionally biased stretch (pro residues) spans 84–104 (PGKPGPRGPPGEPGPPGPRGP). Over residues 127-141 (GGVGVVSGGTGGGGD) the composition is skewed to gly residues. The C1q domain occupies 154 to 287 (FSGPKIAFYV…TFSGFLLYPD (134 aa)).

As to quaternary structure, forms homotrimers which can further assemble to form higher-order oligomeric complexes. Interacts with ADGRB3. May interact with ERFE. Forms heterooligomers with C1QL3 and C1QL4, when proteins are coexpressed; this interaction does not occur after secretion. Post-translationally, glycosylated, but not with N-linked glycans. Highest expression in eye, followed by placenta and brain, intermediate expression in adipose tissue and lowest expression in lymph node and testis.

The protein localises to the secreted. Its function is as follows. May regulate the number of excitatory synapses that are formed on hippocampus neurons. Has no effect on inhibitory synapses. In Mus musculus (Mouse), this protein is Complement C1q-like protein 2 (C1ql2).